The following is a 427-amino-acid chain: Fc receptor-like B (427 aa).

An N-terminal signal peptide occupies residues M1–A17. 2 Ig-like C2-type domains span residues P23–S101 and D103–T189. 2 disulfides stabilise this stretch: C44-C85 and C124-C168. N-linked (GlcNAc...) asparagine glycosylation is present at N152. Polar residues predominate over residues T401 to T418. The segment at T401–S427 is disordered.

Expressed at low levels. Expressed in B-lymphocytes. Detected in spleen, lymph node, kidney, lung and brain.

Its subcellular location is the cytoplasm. It is found in the endoplasmic reticulum. The chain is Fc receptor-like B (Fcrlb) from Mus musculus (Mouse).